The primary structure comprises 229 residues: Flagellar L-ring protein 1 (229 aa).

The signal sequence occupies residues 1 to 18; the sequence is MYLRKISAPLMTMLLLNG. The N-palmitoyl cysteine moiety is linked to residue C19. C19 is lipidated: S-diacylglycerol cysteine.

Belongs to the FlgH family. In terms of assembly, the basal body constitutes a major portion of the flagellar organelle and consists of four rings (L,P,S, and M) mounted on a central rod.

It localises to the cell outer membrane. Its subcellular location is the bacterial flagellum basal body. Assembles around the rod to form the L-ring and probably protects the motor/basal body from shearing forces during rotation. The protein is Flagellar L-ring protein 1 (flgH1) of Yersinia pseudotuberculosis serotype I (strain IP32953).